The sequence spans 188 residues: Protein SSX3 (188 aa).

One can recognise a KRAB-related domain in the interval 20 to 83 (KIQKAFDDIA…KRVTDFQGND (64 aa)). The segment at 113 to 162 (PKKPAEEGNVSKEVPEASGPQNDGKQLCPPGKPTTSEKINMISGPKRGEH) is disordered. Over residues 115–127 (KPAEEGNVSKEVP) the composition is skewed to basic and acidic residues. Phosphoserine is present on S123.

It belongs to the SSX family. As to quaternary structure, interacts with SSX2IP.

Its function is as follows. Could act as a modulator of transcription. This is Protein SSX3 (SSX3) from Homo sapiens (Human).